The primary structure comprises 749 residues: Small G protein signaling modulator 3 (749 aa).

The Rab-GAP TBC domain maps to 113–304 (GIPHGMRPQL…RIWDLFFYEG (192 aa)). Ser-405 is modified (phosphoserine). A coiled-coil region spans residues 414–438 (EDDLEALKAKNIKQTELVADLREAI). In terms of domain architecture, SH3 spans 479–538 (SHRRRAKALLDFERHDDDELGFRKNDIITIISQKDEHCWVGELNGLRGWFPAKFVEVLDE). One can recognise an RUN domain in the interval 554–717 (GVTDLVRGTL…FAFSLSQDWE (164 aa)).

This sequence belongs to the small G protein signaling modulator family. Interacts with GJA1. Interaction with GJA1 induces its degradation. Interacts (via RUN domain) with NF2 (via C-terminus). Interacts with RAB3A, RAB4A, RAB5A, RAB8A, RAB11A, RAP1A, RAP1B, RAP2A, RAP2B and PDCD6I. No interaction with RAB27A. No interaction with GJB1 or GJD2. As to expression, expressed in brain, liver, kidney and testis. Moderately expressed in heart, very weakly in lung and muscle. Not expressed in spleen.

The protein localises to the cytoplasm. In terms of biological role, may play a cooperative role in NF2-mediated growth suppression of cells. May act as a modulator of small G protein RAB- and RAP-mediated neuronal signal transduction and vesicular transportation pathways. The sequence is that of Small G protein signaling modulator 3 from Rattus norvegicus (Rat).